Here is a 572-residue protein sequence, read N- to C-terminus: Dihydroxy-acid dehydratase (572 aa).

A [2Fe-2S] cluster-binding site is contributed by C57. D89 lines the Mg(2+) pocket. Residue C130 coordinates [2Fe-2S] cluster. Mg(2+) contacts are provided by D131 and K132. Position 132 is an N6-carboxylysine (K132). Residue C202 participates in [2Fe-2S] cluster binding. E453 is a binding site for Mg(2+). S479 functions as the Proton acceptor in the catalytic mechanism.

Belongs to the IlvD/Edd family. In terms of assembly, homodimer. The cofactor is [2Fe-2S] cluster. It depends on Mg(2+) as a cofactor.

The catalysed reaction is (2R)-2,3-dihydroxy-3-methylbutanoate = 3-methyl-2-oxobutanoate + H2O. The enzyme catalyses (2R,3R)-2,3-dihydroxy-3-methylpentanoate = (S)-3-methyl-2-oxopentanoate + H2O. It functions in the pathway amino-acid biosynthesis; L-isoleucine biosynthesis; L-isoleucine from 2-oxobutanoate: step 3/4. The protein operates within amino-acid biosynthesis; L-valine biosynthesis; L-valine from pyruvate: step 3/4. Functions in the biosynthesis of branched-chain amino acids. Catalyzes the dehydration of (2R,3R)-2,3-dihydroxy-3-methylpentanoate (2,3-dihydroxy-3-methylvalerate) into 2-oxo-3-methylpentanoate (2-oxo-3-methylvalerate) and of (2R)-2,3-dihydroxy-3-methylbutanoate (2,3-dihydroxyisovalerate) into 2-oxo-3-methylbutanoate (2-oxoisovalerate), the penultimate precursor to L-isoleucine and L-valine, respectively. The polypeptide is Dihydroxy-acid dehydratase (Streptococcus thermophilus (strain CNRZ 1066)).